The primary structure comprises 174 residues: Adenine phosphoribosyltransferase (174 aa).

This sequence belongs to the purine/pyrimidine phosphoribosyltransferase family. As to quaternary structure, homodimer.

It localises to the cytoplasm. It carries out the reaction AMP + diphosphate = 5-phospho-alpha-D-ribose 1-diphosphate + adenine. It functions in the pathway purine metabolism; AMP biosynthesis via salvage pathway; AMP from adenine: step 1/1. Functionally, catalyzes a salvage reaction resulting in the formation of AMP, that is energically less costly than de novo synthesis. The protein is Adenine phosphoribosyltransferase of Lachnoclostridium phytofermentans (strain ATCC 700394 / DSM 18823 / ISDg) (Clostridium phytofermentans).